The chain runs to 239 residues: Ribonuclease 3 (239 aa).

In terms of domain architecture, RNase III spans 12 to 137; the sequence is ISRLEALIGY…LIATLYLDGG (126 aa). E50 contributes to the Mg(2+) binding site. The active site involves D54. Mg(2+) contacts are provided by D123 and E126. E126 is a catalytic residue. Residues 162–231 form the DRBM domain; it reads DAKTELQEWA…ATRLLEREGV (70 aa).

It belongs to the ribonuclease III family. In terms of assembly, homodimer. Mg(2+) is required as a cofactor.

The protein localises to the cytoplasm. It catalyses the reaction Endonucleolytic cleavage to 5'-phosphomonoester.. In terms of biological role, digests double-stranded RNA. Involved in the processing of primary rRNA transcript to yield the immediate precursors to the large and small rRNAs (23S and 16S). Processes some mRNAs, and tRNAs when they are encoded in the rRNA operon. Processes pre-crRNA and tracrRNA of type II CRISPR loci if present in the organism. The chain is Ribonuclease 3 from Agrobacterium fabrum (strain C58 / ATCC 33970) (Agrobacterium tumefaciens (strain C58)).